Here is a 322-residue protein sequence, read N- to C-terminus: tRNA dimethylallyltransferase (322 aa).

An ATP-binding site is contributed by 19 to 26 (GPTASGKT). 21-26 (TASGKT) contacts substrate. Interaction with substrate tRNA regions lie at residues 44 to 47 (DSAL), 168 to 172 (QRIQR), and 255 to 260 (RCVGYR).

This sequence belongs to the IPP transferase family. Monomer. Mg(2+) serves as cofactor.

It carries out the reaction adenosine(37) in tRNA + dimethylallyl diphosphate = N(6)-dimethylallyladenosine(37) in tRNA + diphosphate. Functionally, catalyzes the transfer of a dimethylallyl group onto the adenine at position 37 in tRNAs that read codons beginning with uridine, leading to the formation of N6-(dimethylallyl)adenosine (i(6)A). This is tRNA dimethylallyltransferase from Cupriavidus taiwanensis (strain DSM 17343 / BCRC 17206 / CCUG 44338 / CIP 107171 / LMG 19424 / R1) (Ralstonia taiwanensis (strain LMG 19424)).